A 420-amino-acid polypeptide reads, in one-letter code: Corticotropin-releasing factor receptor 1 (420 aa).

Residues 1–28 (MVPGPRPALLLLLFLLQAFLLWDSPVAA) form the signal peptide. Topologically, residues 29 to 116 (SIQEQYCESL…CQEILSEEKR (88 aa)) are extracellular. Disulfide bonds link Cys35–Cys59, Cys49–Cys92, and Cys73–Cys107. 5 N-linked (GlcNAc...) asparagine glycosylation sites follow: Asn43, Asn50, Asn83, Asn95, and Asn103. The chain crosses the membrane as a helical span at residues 117–147 (SKLHYHIAVIINYLGHCVSLGTLLVAFVLFM). The Cytoplasmic portion of the chain corresponds to 148-154 (RLRSIRC). A helical transmembrane segment spans residues 155–179 (LRNIIHWNLITAFILRNATWFVVQL). The Extracellular segment spans residues 180-194 (TMNPEVHESNVVWCR). Residues Cys193 and Cys263 are joined by a disulfide bond. The chain crosses the membrane as a helical span at residues 195–223 (LVTAAYNYFHVTNFFWMFGEGCYLHTAIV). The Cytoplasmic segment spans residues 224-230 (LTYSTDK). Residues 231–258 (LRKWMFICIGWCIPFPIIVAWAIGKLYY) form a helical membrane-spanning segment. The Extracellular segment spans residues 259 to 274 (DNEKCWFGKRAGVYTD). The chain crosses the membrane as a helical span at residues 275–300 (YIYQGPMILVLLINFIFLFNIVRILM). The Cytoplasmic segment spans residues 301–311 (TKLRASTTSET). A helical transmembrane segment spans residues 312 to 336 (IQYRKAVKATLVLLSLLGITYMLFF). At 337–343 (VNPGEDE) the chain is on the extracellular side. Residues 344–373 (ISRIVFIYFNSFLESFQGFFVSVFYCFLNS) form a helical membrane-spanning segment. The Cytoplasmic portion of the chain corresponds to 374 to 420 (EVRSAVRKRWHRWQDKHSIRARVARAMSIPTSPTRVSFHSIKQSSAV).

Belongs to the G-protein coupled receptor 2 family. As to quaternary structure, interacts (via N-terminal extracellular domain) with CRF and UCN.

It localises to the cell membrane. Functionally, G-protein coupled receptor for CRH (corticotropin-releasing factor) and UCN (urocortin). Has high affinity for CRH and UCN. Ligand binding causes a conformation change that triggers signaling via guanine nucleotide-binding proteins (G proteins) and down-stream effectors, such as adenylate cyclase. Promotes the activation of adenylate cyclase, leading to increased intracellular cAMP levels. The polypeptide is Corticotropin-releasing factor receptor 1 (CRHR1) (Gallus gallus (Chicken)).